We begin with the raw amino-acid sequence, 296 residues long: Acetylglutamate kinase (296 aa).

Substrate contacts are provided by residues glycine 66–glycine 67, arginine 88, and asparagine 191.

This sequence belongs to the acetylglutamate kinase family. ArgB subfamily.

It is found in the cytoplasm. The catalysed reaction is N-acetyl-L-glutamate + ATP = N-acetyl-L-glutamyl 5-phosphate + ADP. It functions in the pathway amino-acid biosynthesis; L-arginine biosynthesis; N(2)-acetyl-L-ornithine from L-glutamate: step 2/4. Functionally, catalyzes the ATP-dependent phosphorylation of N-acetyl-L-glutamate. This Lawsonia intracellularis (strain PHE/MN1-00) protein is Acetylglutamate kinase.